Consider the following 340-residue polypeptide: Myb-related protein Zm1 (340 aa).

2 consecutive HTH myb-type domains span residues 11-63 (KVGL…INYL) and 64-118 (RPDL…KKKV). 2 DNA-binding regions (H-T-H motif) span residues 39-63 (WRAL…INYL) and 91-114 (WSKI…NTHL). Residues 116–126 (KKVAQREKKKA) show a composition bias toward basic residues. 2 disordered regions span residues 116 to 173 (KKVA…DATD) and 190 to 209 (DGAP…SSLT). Positions 133 to 166 (AGTPATAPLSSATSSTTTHNSSGGSDSGDQCGTS) are enriched in low complexity.

Its subcellular location is the nucleus. In terms of biological role, transcription factor that positively regulates genes involved in anthocyanin biosynthesis such as A1. The protein is Myb-related protein Zm1 of Zea mays (Maize).